The primary structure comprises 373 residues: tRNA-specific 2-thiouridylase MnmA (373 aa).

ATP-binding positions include 12-19 (GMSGGVDS) and Met38. The interval 98 to 100 (NPD) is interaction with target base in tRNA. The active-site Nucleophile is the Cys103. Cys103 and Cys200 form a disulfide bridge. Gly127 is an ATP binding site. Residues 150 to 152 (KDQ) form an interaction with tRNA region. The active-site Cysteine persulfide intermediate is Cys200. Residues 312 to 313 (RY) are interaction with tRNA.

This sequence belongs to the MnmA/TRMU family.

The protein resides in the cytoplasm. The enzyme catalyses S-sulfanyl-L-cysteinyl-[protein] + uridine(34) in tRNA + AH2 + ATP = 2-thiouridine(34) in tRNA + L-cysteinyl-[protein] + A + AMP + diphosphate + H(+). Catalyzes the 2-thiolation of uridine at the wobble position (U34) of tRNA, leading to the formation of s(2)U34. This chain is tRNA-specific 2-thiouridylase MnmA, found in Streptococcus pyogenes serotype M18 (strain MGAS8232).